The sequence spans 226 residues: Large ribosomal subunit protein uL4 (226 aa).

Residues glycine 47–arginine 74 form a disordered region.

The protein belongs to the universal ribosomal protein uL4 family. As to quaternary structure, part of the 50S ribosomal subunit.

Functionally, one of the primary rRNA binding proteins, this protein initially binds near the 5'-end of the 23S rRNA. It is important during the early stages of 50S assembly. It makes multiple contacts with different domains of the 23S rRNA in the assembled 50S subunit and ribosome. Its function is as follows. Forms part of the polypeptide exit tunnel. This is Large ribosomal subunit protein uL4 from Kosmotoga olearia (strain ATCC BAA-1733 / DSM 21960 / TBF 19.5.1).